The following is a 269-amino-acid chain: Glutamate racemase (269 aa).

Residues 14 to 15 and 46 to 47 contribute to the substrate site; these read DS and YS. Cys78 acts as the Proton donor/acceptor in catalysis. 79–80 lines the substrate pocket; that stretch reads NT. Residue Cys189 is the Proton donor/acceptor of the active site. 190–191 is a binding site for substrate; it reads TH.

Belongs to the aspartate/glutamate racemases family.

It carries out the reaction L-glutamate = D-glutamate. It participates in cell wall biogenesis; peptidoglycan biosynthesis. In terms of biological role, provides the (R)-glutamate required for cell wall biosynthesis. This Haemophilus influenzae (strain 86-028NP) protein is Glutamate racemase.